We begin with the raw amino-acid sequence, 438 residues long: Myosin light chain kinase, smooth muscle (438 aa).

The region spanning 1–241 (FRLVEKKTGK…CTQCLQHPWL (241 aa)) is the Protein kinase domain. Position 15 (K15) interacts with ATP. The residue at position 97 (Y97) is a Phosphotyrosine; by ABL1. The active-site Proton acceptor is the D107. Position 157 is a phosphotyrosine; by ABL1 (Y157). The interval 233–296 (TQCLQHPWLX…SGLSGRKSST (64 aa)) is calmodulin-binding. 5 positions are modified to phosphoserine: S281, S282, S294, S295, and S298. Residues 283–438 (MAMISGLSGR…GEGGEEEEEE (156 aa)) form a telokin region. A disordered region spans residues 289-309 (LSGRKSSTGSPTSPLNAEKLE). The segment covering 292-303 (RKSSTGSPTSPL) has biased composition (polar residues). T300 is subject to Phosphothreonine. S301 carries the phosphoserine modification. The Ig-like C2-type domain occupies 331–420 (PYFSKTIRDL…GEATCTAELI (90 aa)). A disulfide bond links C352 and C404.

Belongs to the protein kinase superfamily. CAMK Ser/Thr protein kinase family. As to quaternary structure, all isoforms including Telokin bind calmodulin. Interacts with SVIL. Interacts with CTTN; this interaction is reduced during thrombin-induced endothelial cell (EC) contraction but is promoted by the barrier-protective agonist sphingosine 1-phosphate (S1P) within lamellipodia. A complex made of ABL1, CTTN and MYLK regulates cortical actin-based cytoskeletal rearrangement critical to sphingosine 1-phosphate (S1P)-mediated endothelial cell (EC) barrier enhancement. Binds to NAA10/ARD1 and PTK2B/PYK2. It depends on Mg(2+) as a cofactor. Ca(2+) is required as a cofactor. In terms of processing, the C-terminus is deglutamylated by AGTPBP1/CCP1, AGBL1/CCP4 and AGBL4/CCP6, leading to the formation of Myosin light chain kinase, smooth muscle, deglutamylated form. The consequences of C-terminal deglutamylation are unknown. Can probably be down-regulated by phosphorylation. Tyrosine phosphorylation by ABL1 increases kinase activity, reverses MLCK-mediated inhibition of Arp2/3-mediated actin polymerization, and enhances CTTN-binding. Phosphorylation by SRC promotes CTTN binding.

It is found in the cytoplasm. The protein localises to the cell projection. Its subcellular location is the lamellipodium. The protein resides in the cleavage furrow. It localises to the cytoskeleton. It is found in the stress fiber. The enzyme catalyses L-seryl-[myosin light chain] + ATP = O-phospho-L-seryl-[myosin light chain] + ADP + H(+). It carries out the reaction L-threonyl-[myosin light chain] + ATP = O-phospho-L-threonyl-[myosin light chain] + ADP + H(+). Functionally, calcium/calmodulin-dependent myosin light chain kinase implicated in smooth muscle contraction via phosphorylation of myosin light chains (MLC). Also regulates actin-myosin interaction through a non-kinase activity. Phosphorylates PTK2B/PYK2 and myosin light-chains. Involved in the inflammatory response (e.g. apoptosis, vascular permeability, leukocyte diapedesis), cell motility and morphology, airway hyperreactivity and other activities relevant to asthma. Required for tonic airway smooth muscle contraction that is necessary for physiological and asthmatic airway resistance. Necessary for gastrointestinal motility. Implicated in the regulation of endothelial as well as vascular permeability, probably via the regulation of cytoskeletal rearrangements. In the nervous system it has been shown to control the growth initiation of astrocytic processes in culture and to participate in transmitter release at synapses formed between cultured sympathetic ganglion cells. Critical participant in signaling sequences that result in fibroblast apoptosis. Plays a role in the regulation of epithelial cell survival. Required for epithelial wound healing, especially during actomyosin ring contraction during purse-string wound closure. Mediates RhoA-dependent membrane blebbing. Triggers TRPC5 channel activity in a calcium-dependent signaling, by inducing its subcellular localization at the plasma membrane. Promotes cell migration (including tumor cells) and tumor metastasis. PTK2B/PYK2 activation by phosphorylation mediates ITGB2 activation and is thus essential to trigger neutrophil transmigration during acute lung injury (ALI). May regulate optic nerve head astrocyte migration. Probably involved in mitotic cytoskeletal regulation. Regulates tight junction probably by modulating ZO-1 exchange in the perijunctional actomyosin ring. Mediates burn-induced microvascular barrier injury; triggers endothelial contraction in the development of microvascular hyperpermeability by phosphorylating MLC. Essential for intestinal barrier dysfunction. Mediates Giardia spp.-mediated reduced epithelial barrier function during giardiasis intestinal infection via reorganization of cytoskeletal F-actin and tight junctional ZO-1. Necessary for hypotonicity-induced Ca(2+) entry and subsequent activation of volume-sensitive organic osmolyte/anion channels (VSOAC) in cervical cancer cells. This chain is Myosin light chain kinase, smooth muscle (MYLK), found in Ovis aries (Sheep).